Reading from the N-terminus, the 447-residue chain is Ribulose bisphosphate carboxylase large chain (447 aa).

Substrate-binding residues include Asn89 and Thr139. Lys141 functions as the Proton acceptor in the catalytic mechanism. Position 143 (Lys143) interacts with substrate. The Mg(2+) site is built by Lys167, Asp169, and Glu170. The residue at position 167 (Lys167) is an N6-carboxylysine. His260 functions as the Proton acceptor in the catalytic mechanism. Arg261, His293, and Ser345 together coordinate substrate.

Belongs to the RuBisCO large chain family. Type I subfamily. As to quaternary structure, heterohexadecamer of 8 large chains and 8 small chains; disulfide-linked. The disulfide link is formed within the large subunit homodimers. It depends on Mg(2+) as a cofactor. The disulfide bond which can form in the large chain dimeric partners within the hexadecamer appears to be associated with oxidative stress and protein turnover.

The protein resides in the plastid. It is found in the chloroplast. The catalysed reaction is 2 (2R)-3-phosphoglycerate + 2 H(+) = D-ribulose 1,5-bisphosphate + CO2 + H2O. The enzyme catalyses D-ribulose 1,5-bisphosphate + O2 = 2-phosphoglycolate + (2R)-3-phosphoglycerate + 2 H(+). In terms of biological role, ruBisCO catalyzes two reactions: the carboxylation of D-ribulose 1,5-bisphosphate, the primary event in carbon dioxide fixation, as well as the oxidative fragmentation of the pentose substrate in the photorespiration process. Both reactions occur simultaneously and in competition at the same active site. This Ligustrum vulgare (Common privet) protein is Ribulose bisphosphate carboxylase large chain.